Consider the following 185-residue polypeptide: Crossover junction endodeoxyribonuclease RuvC (185 aa).

Active-site residues include Asp-7, Glu-68, and Asp-141. Mg(2+) is bound by residues Asp-7, Glu-68, and Asp-141.

This sequence belongs to the RuvC family. Homodimer which binds Holliday junction (HJ) DNA. The HJ becomes 2-fold symmetrical on binding to RuvC with unstacked arms; it has a different conformation from HJ DNA in complex with RuvA. In the full resolvosome a probable DNA-RuvA(4)-RuvB(12)-RuvC(2) complex forms which resolves the HJ. It depends on Mg(2+) as a cofactor.

It is found in the cytoplasm. The catalysed reaction is Endonucleolytic cleavage at a junction such as a reciprocal single-stranded crossover between two homologous DNA duplexes (Holliday junction).. The RuvA-RuvB-RuvC complex processes Holliday junction (HJ) DNA during genetic recombination and DNA repair. Endonuclease that resolves HJ intermediates. Cleaves cruciform DNA by making single-stranded nicks across the HJ at symmetrical positions within the homologous arms, yielding a 5'-phosphate and a 3'-hydroxyl group; requires a central core of homology in the junction. The consensus cleavage sequence is 5'-(A/T)TT(C/G)-3'. Cleavage occurs on the 3'-side of the TT dinucleotide at the point of strand exchange. HJ branch migration catalyzed by RuvA-RuvB allows RuvC to scan DNA until it finds its consensus sequence, where it cleaves and resolves the cruciform DNA. This Helicobacter hepaticus (strain ATCC 51449 / 3B1) protein is Crossover junction endodeoxyribonuclease RuvC.